The sequence spans 418 residues: Actin-related protein 3 (418 aa).

Ala-2 bears the N-acetylalanine mark. 4 positions are modified to N6-acetyllysine: Lys-240, Lys-244, Lys-251, and Lys-254.

Belongs to the actin family. ARP3 subfamily. In terms of assembly, component of the Arp2/3 complex composed of ACTR2/ARP2, ACTR3/ARP3, ARPC1B/p41-ARC, ARPC2/p34-ARC, ARPC3/p21-ARC, ARPC4/p20-ARC and ARPC5/p16-ARC. Interacts with WHDC1. Interacts weakly with MEFV. Interacts with AVIL.

Its subcellular location is the cytoplasm. It is found in the cytoskeleton. The protein resides in the cell projection. It localises to the nucleus. Its function is as follows. ATP-binding component of the Arp2/3 complex, a multiprotein complex that mediates actin polymerization upon stimulation by nucleation-promoting factor (NPF). The Arp2/3 complex mediates the formation of branched actin networks in the cytoplasm, providing the force for cell motility. Seems to contact the pointed end of the daughter actin filament. In podocytes, required for the formation of lamellipodia downstream of AVIL and PLCE1 regulation. In addition to its role in the cytoplasmic cytoskeleton, the Arp2/3 complex also promotes actin polymerization in the nucleus, thereby regulating gene transcription and repair of damaged DNA. The Arp2/3 complex promotes homologous recombination (HR) repair in response to DNA damage by promoting nuclear actin polymerization, leading to drive motility of double-strand breaks (DSBs). Plays a role in ciliogenesis. This Bos taurus (Bovine) protein is Actin-related protein 3 (ACTR3).